The chain runs to 165 residues: Large ribosomal subunit protein uL10 (165 aa).

It belongs to the universal ribosomal protein uL10 family. Part of the ribosomal stalk of the 50S ribosomal subunit. The N-terminus interacts with L11 and the large rRNA to form the base of the stalk. The C-terminus forms an elongated spine to which L12 dimers bind in a sequential fashion forming a multimeric L10(L12)X complex.

Functionally, forms part of the ribosomal stalk, playing a central role in the interaction of the ribosome with GTP-bound translation factors. The polypeptide is Large ribosomal subunit protein uL10 (Hamiltonella defensa subsp. Acyrthosiphon pisum (strain 5AT)).